The following is a 448-amino-acid chain: Probable glucuronoxylan glucuronosyltransferase IRX7 (448 aa).

Residues 1-16 (MTTHKHRRTEKNLCFK) are Cytoplasmic-facing. Residues 17–37 (QYYKWILCFILTLYFFASFFV) form a helical; Signal-anchor for type II membrane protein membrane-spanning segment. Residues 38–448 (DHDQDHRSST…RSVRRSNSFL (411 aa)) lie on the Lumenal side of the membrane. Residues asparagine 157, asparagine 189, asparagine 287, asparagine 397, and asparagine 438 are each glycosylated (N-linked (GlcNAc...) asparagine).

It belongs to the glycosyltransferase 47 family. As to expression, expressed in developing interfascicular fibers and xylem cells in stems and developing secondary xylem in roots.

Its subcellular location is the golgi apparatus membrane. In terms of biological role, involved in the synthesis of the hemicellulose glucuronoxylan, a major component of secondary cell walls. Probably involved in the synthesis of the glycosyl sequence at the glucuronoxylan reducing end. The polypeptide is Probable glucuronoxylan glucuronosyltransferase IRX7 (IRX7) (Arabidopsis thaliana (Mouse-ear cress)).